Reading from the N-terminus, the 211-residue chain is Large ribosomal subunit protein uL4 (211 aa).

The disordered stretch occupies residues 44–94; sequence RSGNHATKTRSEVRGGGKKPWSQKGTGHARQGSTRAPHWVGGGTVHGPQKR.

It belongs to the universal ribosomal protein uL4 family. In terms of assembly, part of the 50S ribosomal subunit.

Its function is as follows. One of the primary rRNA binding proteins, this protein initially binds near the 5'-end of the 23S rRNA. It is important during the early stages of 50S assembly. It makes multiple contacts with different domains of the 23S rRNA in the assembled 50S subunit and ribosome. In terms of biological role, forms part of the polypeptide exit tunnel. The chain is Large ribosomal subunit protein uL4 from Leptospira borgpetersenii serovar Hardjo-bovis (strain JB197).